The sequence spans 474 residues: Chromosomal replication initiator protein DnaA (474 aa).

Positions 1–91 (MSEELWQRCL…STRASTPAAS (91 aa)) are domain I, interacts with DnaA modulators. Residues 89–138 (AASYFNGSSSSSSNGPITTPAAAPAPRQPESDSRPQPTSLGGARKHRSNL) form a disordered region. Residues 91–136 (SYFNGSSSSSSNGPITTPAAAPAPRQPESDSRPQPTSLGGARKHRS) are domain II. Over residues 96–113 (SSSSSSNGPITTPAAAPA) the composition is skewed to low complexity. A domain III, AAA+ region region spans residues 137-354 (NLNTGFTFST…GALRRVIAHV (218 aa)). 4 residues coordinate ATP: Gly182, Gly184, Lys185, and Thr186. The domain IV, binds dsDNA stretch occupies residues 355–474 (RFTGAQIDIG…YLNLLRTLTS (120 aa)).

The protein belongs to the DnaA family. As to quaternary structure, oligomerizes as a right-handed, spiral filament on DNA at oriC.

The protein localises to the cytoplasm. Plays an essential role in the initiation and regulation of chromosomal replication. ATP-DnaA binds to the origin of replication (oriC) to initiate formation of the DNA replication initiation complex once per cell cycle. Binds the DnaA box (a 9 base pair repeat at the origin) and separates the double-stranded (ds)DNA. Forms a right-handed helical filament on oriC DNA; dsDNA binds to the exterior of the filament while single-stranded (ss)DNA is stabiized in the filament's interior. The ATP-DnaA-oriC complex binds and stabilizes one strand of the AT-rich DNA unwinding element (DUE), permitting loading of DNA polymerase. After initiation quickly degrades to an ADP-DnaA complex that is not apt for DNA replication. Binds acidic phospholipids. The sequence is that of Chromosomal replication initiator protein DnaA from Alcanivorax borkumensis (strain ATCC 700651 / DSM 11573 / NCIMB 13689 / SK2).